The primary structure comprises 514 residues: Protein Tube (514 aa).

Disordered regions lie at residues 226-250 (VPQQLENGTSSTVPVPPPRAARSSR), 255-274 (TASNVAPTTASNAPSASNTA), 324-343 (LDAGKSDNASNGRSSASTST), 366-385 (ASDATQITSKSTATKTVPDM), and 413-514 (NGAK…ELQQ). Low complexity predominate over residues 259–274 (VAPTTASNAPSASNTA). Over residues 422–433 (ADNNSSGTNSLS) the composition is skewed to polar residues. A compositionally biased stretch (acidic residues) spans 434 to 460 (NDDDEQKEDDDDDDDDDVVDVDDEEAD). Polar residues predominate over residues 477–514 (TTVTCTSGENSFEFTNDSSSASNDDYTNNIPNLSELQQ).

Maternal and zygotic gene product.

The protein resides in the cytoplasm. Required for the determination of embryonic dorsoventral polarity. Is involved in transduction of information regulating nuclear import of dorsal protein. The chain is Protein Tube (tub) from Drosophila virilis (Fruit fly).